We begin with the raw amino-acid sequence, 287 residues long: Mu-like prophage FluMu DNA transposition protein B (287 aa).

An HTH cro/C1-type domain is found at L7 to A62. Positions Q18–N37 form a DNA-binding region, H-T-H motif. G98–T105 serves as a coordination point for ATP.

Functionally, this protein is a non-specific DNA-binding and ATP-hydrolyzing protein essential for bacteriophage integration and replication. The sequence is that of Mu-like prophage FluMu DNA transposition protein B from Haemophilus influenzae (strain ATCC 51907 / DSM 11121 / KW20 / Rd).